A 458-amino-acid polypeptide reads, in one-letter code: NADH-quinone oxidoreductase subunit N (458 aa).

The next 14 helical transmembrane spans lie at 2–22 (LLLLPEITLTLIALLGQCFAL), 30–50 (IIYNIVILLCIISIFLTFKYS), 71–91 (IILLFTIVSLIIYRDYSILVG), 93–113 (TLKFEFITLMLLSIVGIFVAI), 118–138 (FLLLFCGMELTALTSYALAGF), 153–173 (FILGSLVSCLSLFGISFIYGF), 196–216 (LIIGIVLFLSSIFFKLASSPL), 235–255 (FTAASKIGMVIVLLNISKLII), 261–281 (INYNLIKIIAILSMLFGAFGA), 290–310 (LMAYSTILNIGYVLIGVLLHN), 319–339 (LYILIYAVVSIGFFTCLIMLF), 361–381 (IAALISIVMFSMIGIPPLTGF), 397–417 (FTLAYCGIFTSVVAAFYYLKV), and 438–458 (LLLINYLVLGFLLFGSFIILF).

It belongs to the complex I subunit 2 family. As to quaternary structure, NDH-1 is composed of 14 different subunits. Subunits NuoA, H, J, K, L, M, N constitute the membrane sector of the complex.

It is found in the cell inner membrane. It catalyses the reaction a quinone + NADH + 5 H(+)(in) = a quinol + NAD(+) + 4 H(+)(out). In terms of biological role, NDH-1 shuttles electrons from NADH, via FMN and iron-sulfur (Fe-S) centers, to quinones in the respiratory chain. The immediate electron acceptor for the enzyme in this species is believed to be ubiquinone. Couples the redox reaction to proton translocation (for every two electrons transferred, four hydrogen ions are translocated across the cytoplasmic membrane), and thus conserves the redox energy in a proton gradient. This Rickettsia prowazekii (strain Madrid E) protein is NADH-quinone oxidoreductase subunit N.